Here is a 440-residue protein sequence, read N- to C-terminus: Chromosome partition protein MukF (440 aa).

The interval 208 to 236 (LSETSGTLRELQDTLEAAGDKLQANLLRI) is leucine-zipper.

This sequence belongs to the MukF family. As to quaternary structure, interacts, and probably forms a ternary complex, with MukE and MukB via its C-terminal region. The complex formation is stimulated by calcium or magnesium. It is required for an interaction between MukE and MukB.

Its subcellular location is the cytoplasm. It localises to the nucleoid. In terms of biological role, involved in chromosome condensation, segregation and cell cycle progression. May participate in facilitating chromosome segregation by condensation DNA from both sides of a centrally located replisome during cell division. Not required for mini-F plasmid partitioning. Probably acts via its interaction with MukB and MukE. Overexpression results in anucleate cells. It has a calcium binding activity. The protein is Chromosome partition protein MukF of Escherichia coli O157:H7.